The chain runs to 235 residues: Sperm annulus positionning complex subunit Chibby3 (235 aa).

A disordered region spans residues 1–41 (MADSKMKWGQAWDSSLGTATTSSSSATGSPSPFQNIRVPDT). The segment covering 14-32 (SSLGTATTSSSSATGSPSP) has biased composition (low complexity). Positions 167 to 181 (LLEENNYLKLQQELL) are leucine-zipper; mediates homodimerization.

This sequence belongs to the chibby family. In terms of assembly, homodimer. Interacts with CIBAR1 (via BAR-like domain); both proteins form a ninefold symmetric structure at the flagellar base; are recruited to the annulus in a mutually dependent manner and regulate annulus positionning. Testis-specific.

It localises to the cell projection. The protein resides in the cilium. The protein localises to the flagellum. Plays a key role in the correct positioning of the annulus, a septin-based ring strucure in the sperm flagellum, serving both as a physical barrier and a membrane diffusion barrier that separates the midpiece (MP) from the principal piece (PP). This positioning is essential for proper sperm motility and function. Interacts with CIBAR1 to form a complex which localizes to the curved membrane region of the flagellar pocket. By doing so, may provide stability and rigidity to the periannular membrane to prevent membrane deformation. This function is crucial for halting annulus migration at the proximal end of the fibrous sheath-containing PP. The protein is Sperm annulus positionning complex subunit Chibby3 (Cby3) of Mus musculus (Mouse).